A 320-amino-acid polypeptide reads, in one-letter code: Cytochrome c biogenesis protein CcsA (320 aa).

7 helical membrane-spanning segments follow: residues 14–34, 68–88, 101–121, 146–166, 226–246, 260–277, and 289–309; these read VLLL…WCFW, GHFP…ACTL, LVAA…SFAL, VIMV…AVLM, TITV…VWAN, TWAL…HTRL, and VASL…LLGI.

Belongs to the CcmF/CycK/Ccl1/NrfE/CcsA family. In terms of assembly, may interact with ccs1.

The protein localises to the cellular thylakoid membrane. Functionally, required during biogenesis of c-type cytochromes (cytochrome c6 and cytochrome f) at the step of heme attachment. The protein is Cytochrome c biogenesis protein CcsA of Synechococcus sp. (strain WH7803).